The primary structure comprises 314 residues: Acetyl-coenzyme A carboxylase carboxyl transferase subunit alpha (314 aa).

The CoA carboxyltransferase C-terminal domain maps to 32-289 (EIDMLEASLE…KSAFVAQLDS (258 aa)).

The protein belongs to the AccA family. Acetyl-CoA carboxylase is a heterohexamer composed of biotin carboxyl carrier protein (AccB), biotin carboxylase (AccC) and two subunits each of ACCase subunit alpha (AccA) and ACCase subunit beta (AccD).

It localises to the cytoplasm. The enzyme catalyses N(6)-carboxybiotinyl-L-lysyl-[protein] + acetyl-CoA = N(6)-biotinyl-L-lysyl-[protein] + malonyl-CoA. The protein operates within lipid metabolism; malonyl-CoA biosynthesis; malonyl-CoA from acetyl-CoA: step 1/1. Component of the acetyl coenzyme A carboxylase (ACC) complex. First, biotin carboxylase catalyzes the carboxylation of biotin on its carrier protein (BCCP) and then the CO(2) group is transferred by the carboxyltransferase to acetyl-CoA to form malonyl-CoA. This chain is Acetyl-coenzyme A carboxylase carboxyl transferase subunit alpha, found in Staphylococcus aureus (strain NCTC 8325 / PS 47).